Consider the following 144-residue polypeptide: Cell division protein SepF (144 aa).

The span at 21 to 38 shows a compositional bias: polar residues; the sequence is TDLQGTKTTDEVSPTSRP. Positions 21–40 are disordered; the sequence is TDLQGTKTTDEVSPTSRPDN.

This sequence belongs to the SepF family. In terms of assembly, homodimer. Interacts with FtsZ.

The protein resides in the cytoplasm. Functionally, cell division protein that is part of the divisome complex and is recruited early to the Z-ring. Probably stimulates Z-ring formation, perhaps through the cross-linking of FtsZ protofilaments. Its function overlaps with FtsA. The chain is Cell division protein SepF from Latilactobacillus sakei subsp. sakei (strain 23K) (Lactobacillus sakei subsp. sakei).